The chain runs to 418 residues: Glutamyl-tRNA reductase (418 aa).

Substrate is bound by residues 51-54, S107, 112-114, and Q118; these read TCNR and EPQ. The active-site Nucleophile is C52. 187–192 provides a ligand contact to NADP(+); it reads GAGETA.

The protein belongs to the glutamyl-tRNA reductase family. Homodimer.

The enzyme catalyses (S)-4-amino-5-oxopentanoate + tRNA(Glu) + NADP(+) = L-glutamyl-tRNA(Glu) + NADPH + H(+). The protein operates within porphyrin-containing compound metabolism; protoporphyrin-IX biosynthesis; 5-aminolevulinate from L-glutamyl-tRNA(Glu): step 1/2. Functionally, catalyzes the NADPH-dependent reduction of glutamyl-tRNA(Glu) to glutamate 1-semialdehyde (GSA). This chain is Glutamyl-tRNA reductase, found in Dichelobacter nodosus (strain VCS1703A).